The primary structure comprises 129 residues: Cytochrome c3 (129 aa).

Residues methionine 1–alanine 22 form the signal peptide. Heme c-binding residues include histidine 44, histidine 47, cysteine 52, cysteine 55, histidine 56, histidine 57, cysteine 68, cysteine 73, histidine 74, histidine 92, cysteine 101, cysteine 104, histidine 105, cysteine 122, cysteine 127, and histidine 128.

Binds 4 heme c groups per subunit.

It is found in the periplasm. Its function is as follows. Participates in sulfate respiration coupled with phosphorylation by transferring electrons from the enzyme dehydrogenase to ferredoxin. This is Cytochrome c3 from Nitratidesulfovibrio vulgaris (strain ATCC 29579 / DSM 644 / CCUG 34227 / NCIMB 8303 / VKM B-1760 / Hildenborough) (Desulfovibrio vulgaris).